The sequence spans 804 residues: Phenylalanine--tRNA ligase beta subunit (804 aa).

The region spanning 40 to 155 (GEGIKGVVIG…GDAETGADAL (116 aa)) is the tRNA-binding domain. The region spanning 409-484 (IKENVIRLSV…RLYGYDNIPS (76 aa)) is the B5 domain. Mg(2+) is bound by residues Asp462, Asp468, Glu471, and Glu472. In terms of domain architecture, FDX-ACB spans 710–803 (PKYPSVTRDI…LEDKYQAVLR (94 aa)).

Belongs to the phenylalanyl-tRNA synthetase beta subunit family. Type 1 subfamily. In terms of assembly, tetramer of two alpha and two beta subunits. The cofactor is Mg(2+).

Its subcellular location is the cytoplasm. It catalyses the reaction tRNA(Phe) + L-phenylalanine + ATP = L-phenylalanyl-tRNA(Phe) + AMP + diphosphate + H(+). The chain is Phenylalanine--tRNA ligase beta subunit from Bacillus licheniformis (strain ATCC 14580 / DSM 13 / JCM 2505 / CCUG 7422 / NBRC 12200 / NCIMB 9375 / NCTC 10341 / NRRL NRS-1264 / Gibson 46).